The following is a 174-amino-acid chain: Ribosome maturation factor RimM (174 aa).

The PRC barrel domain maps to 98–171; it reads EDEYYFHEII…TIKIHIMEGL (74 aa).

The protein belongs to the RimM family. As to quaternary structure, binds ribosomal protein uS19.

The protein localises to the cytoplasm. An accessory protein needed during the final step in the assembly of 30S ribosomal subunit, possibly for assembly of the head region. Essential for efficient processing of 16S rRNA. May be needed both before and after RbfA during the maturation of 16S rRNA. It has affinity for free ribosomal 30S subunits but not for 70S ribosomes. This Bacillus licheniformis (strain ATCC 14580 / DSM 13 / JCM 2505 / CCUG 7422 / NBRC 12200 / NCIMB 9375 / NCTC 10341 / NRRL NRS-1264 / Gibson 46) protein is Ribosome maturation factor RimM.